The chain runs to 2383 residues: Reducing polyketide synthase rdc5 (2383 aa).

The 429-residue stretch at Arg10–Arg438 folds into the Ketosynthase family 3 (KS3) domain. Residues Cys186, His321, and His361 each act as for beta-ketoacyl synthase activity in the active site. The interval Phe550–Gly881 is malonyl-CoA:ACP transacylase (MAT) domain. An N-terminal hotdog fold region spans residues Lys930–Ser1066. The 324-residue stretch at Lys930–Asp1253 folds into the PKS/mFAS DH domain. The dehydratase (DH) domain stretch occupies residues Leu932–Glu1250. Catalysis depends on His962, which acts as the Proton acceptor; for dehydratase activity. Residues Val1094–Asp1253 are C-terminal hotdog fold. Asp1160 serves as the catalytic Proton donor; for dehydratase activity. The tract at residues Gly1663–Leu1977 is enoyl reductase (ER) domain. Cys1776 (phosphocysteine intermediate) is an active-site residue. The tract at residues Ala2002 to Asp2182 is ketoreductase (KR) domain. The region spanning Ala2300 to Ser2377 is the Carrier domain. Ser2337 bears the O-(pantetheine 4'-phosphoryl)serine mark.

It participates in secondary metabolite biosynthesis. In terms of biological role, reducing polyketide synthase; part of the gene cluster that mediates the biosynthesis of radicicol, a resorcylic acid lactone (RAL) that irreversibly inhibits the HSP90 molecular chaperone, an important target for cancer chemotherapy. The radicicol cluster encodes only two apparent post-PKS enzymes, a cytochrome P450 monooxygenase (rdc4) and a non-heme halogenase (rdc2) that could introduce the epoxide and the chlorine, respectively. If this cluster includes all the genes required for radicicol biosynthesis, the remaining structural features of radicicol are presumably generated by the PKSs rdc1 and rdc5. The C-2' ketone could arise if the R-PKS rdc5 and NR-PKS rdc1 each carry out four iterations, in contrast to the five iteration-three iteration split for the hypothemycin PKSs. The origin of the cis 5',6' double bond is not known. The radicicol R-PKS rdc5 ER domain may catalyze either double bond isomerization or reduction in the third iteration. The chain is Reducing polyketide synthase rdc5 from Metacordyceps chlamydosporia (Nematophagous fungus).